Consider the following 449-residue polypeptide: Exodeoxyribonuclease 7 large subunit (449 aa).

Belongs to the XseA family. In terms of assembly, heterooligomer composed of large and small subunits.

Its subcellular location is the cytoplasm. The enzyme catalyses Exonucleolytic cleavage in either 5'- to 3'- or 3'- to 5'-direction to yield nucleoside 5'-phosphates.. Its function is as follows. Bidirectionally degrades single-stranded DNA into large acid-insoluble oligonucleotides, which are then degraded further into small acid-soluble oligonucleotides. The sequence is that of Exodeoxyribonuclease 7 large subunit from Salmonella dublin (strain CT_02021853).